Reading from the N-terminus, the 76-residue chain is Conotoxin ArMKLT2-032 (76 aa).

The N-terminal stretch at 1-22 (MKLTCVLIIAVLFLTACQLTTG) is a signal peptide. The propeptide occupies 23–46 (ETYSRGEQKDHALRSTDKNSKLTR). The residue at position 47 (glutamine 47) is a Pyrrolidone carboxylic acid. Intrachain disulfides connect cysteine 48-cysteine 62, cysteine 55-cysteine 66, and cysteine 61-cysteine 73.

It belongs to the conotoxin O1 superfamily. As to expression, expressed by the venom duct.

Its subcellular location is the secreted. This chain is Conotoxin ArMKLT2-032, found in Conus arenatus (Sand-dusted cone).